The sequence spans 776 residues: Cullin-1 (776 aa).

Arginine 63 carries the post-translational modification Omega-N-methylarginine. A Cullin neddylation domain is found at 706 to 766 (DRKLLIQAAI…IEKEYLERVD (61 aa)). Lysine 720 is covalently cross-linked (Glycyl lysine isopeptide (Lys-Gly) (interchain with G-Cter in NEDD8)).

Belongs to the cullin family. Component of multiple Cul1-RING E3 ubiquitin-protein ligase complexes commonly known as SCF (SKP1-CUL1-F-box) complexes, consisting of CUL1, SKP1, RBX1 and a variable F-box domain-containing protein as substrate-specific subunit. Component of the SCF(FBXW11) complex containing FBXW11. Component of the SCF(SKP2) complex containing SKP2, in which it interacts directly with SKP1, SKP2 and RBX1. Component of the SCF(FBXW2) complex containing FBXW2. Component of the SCF(FBXO32) complex containing FBXO32. Component of the probable SCF(FBXO7) complex containing FBXO7. Component of the SCF(FBXO10) complex containing FBXO10. Component of the SCF(FBXO11) complex containing FBXO11. Component of the SCF(FBXO25) complex containing FBXO25. Component of the SCF(FBXO33) complex containing FBXO33. Component of the probable SCF(FBXO4) complex containing FBXO4. Component of the SCF(FBXO44) complex, composed of SKP1, CUL1 and FBXO44. Component of the SCF(BTRC) complex, composed of SKP1, CUL1 and BTRC. This complex binds phosphorylated NFKBIA. Part of a SCF complex consisting of CUL1, RBX1, SKP1 and FBXO2. Component of a SCF(SKP2)-like complex containing CUL1, SKP1, TRIM21 and SKP2. Component of the SCF(FBXO17) complex, composed of SKP1, CUL1 and FBXO17. Component of the SCF(FBXO27) complex, composed of SKP1, CUL1 and FBXO27. Component of the SCF(CCNF) complex consisting of CUL1, RBX1, SKP1 and CCNF. Interacts with CCNF. Component of the SCF(FBXL3) complex composed of CUL1, SKP1, RBX1 and FBXL3. Component of the SCF(FBXL21) complex composed of CUL1, SKP1, RBX1 and FBXL21. Component of the SCF(FBXO9) composed of CUL1, SKP1, RBX1 and FBXO9. Component of the SCF(FBXW7) composed of CUL1, SKP1, RBX1 and FBXW7. Component of the SCF(FBXO31) complex composed of CUL1, SKP1, RBX1 and FBXO31. Interacts with CHEK2; mediates CHEK2 ubiquitination and regulates its function. Part of a complex with TIP120A/CAND1 and RBX1. The unneddylated form interacts with TIP120A/CAND1 and the interaction mediates the exchange of the F-box substrate-specific subunit. Can self-associate. Interacts with FBXW8. Interacts with RNF7. Interacts with TRIM21. Interacts with COPS2. Interacts with DCUN1D1 and UBE2M. Interacts with DCUN1D3. Interacts with DCUN1D4. Identified in a complex with RBX1 and GLMN. Interacts with CEP68 as part of the SCF(FBXW11) complex; the interaction is probably mediated by FBXW11 and the complex also contains CDK5RAP2 and PCNT. Interacts (when neddylated) with ARIH1; leading to activate the E3 ligase activity of ARIH1. Interacts with COPS9. Interacts with UBXN1. Interacts with KAT7, probably as part of an SCF complex; the interaction mediates KAT7 ubiquitination. Interacts with NOTCH2. Part of a complex that contains DCUN1D5, CUL1 and RBX1; this interaction is bridged by CUL1. Interacts (unneddylated form) with DCUN1D1, DCUN1D2, DCUN1D3, DCUN1D4 and DCUN1D5; these interactions promote the cullin neddylation. Interacts (via the C-terminal domain) with CUL7; the interaction seems to be mediated by FBXW8; it is likely specific to FBXW8, but not other F-box proteins. Interacts with UBR2, as part of SCF(BTRC) complex; the interaction mediates 'Lys-48'-linked ubiquitination of UBR2 and is regulated by DUSP22 in the T-cell receptor signaling pathway. In terms of assembly, (Microbial infection) Interacts with murine cytomegalovirus M48. Post-translationally, neddylated; which enhances the ubiquitination activity of SCF. Neddylation prevents binding of the inhibitor CAND1. Neddylation leads to structural rearrangment in the complex that allows interaction between the E2 ubiquitin-conjugating enzyme and the acceptor ubiquitin. Deneddylated via its interaction with the COP9 signalosome (CSN) complex. (Microbial infection) Deneddylated by murine cytomegalovirus M48 leading to a S-phase-like environment that is required for efficient replication of the viral genome. Embryo fibroblasts and embryo preadipocytes.

It functions in the pathway protein modification; protein ubiquitination. Functionally, core component of multiple cullin-RING-based SCF (SKP1-CUL1-F-box protein) E3 ubiquitin-protein ligase complexes, which mediate the ubiquitination of proteins involved in cell cycle progression, signal transduction and transcription. SCF complexes and ARIH1 collaborate in tandem to mediate ubiquitination of target proteins. In the SCF complex, serves as a rigid scaffold that organizes the SKP1-F-box protein and RBX1 subunits. May contribute to catalysis through positioning of the substrate and the ubiquitin-conjugating enzyme. The E3 ubiquitin-protein ligase activity of the complex is dependent on the neddylation of the cullin subunit and exchange of the substrate recognition component is mediated by TIP120A/CAND1. The functional specificity of the SCF complex depends on the F-box protein as substrate recognition component. SCF(BTRC) and SCF(FBXW11) direct ubiquitination of CTNNB1 and participate in Wnt signaling. SCF(FBXW11) directs ubiquitination of phosphorylated NFKBIA. SCF(BTRC) directs ubiquitination of NFKBIB, NFKBIE, ATF4, SMAD3, SMAD4, CDC25A, FBXO5 and probably NFKB2. SCF(BTRC) and/or SCF(FBXW11) direct ubiquitination of CEP68. SCF(SKP2) directs ubiquitination of phosphorylated CDKN1B/p27kip and is involved in regulation of G1/S transition. SCF(SKP2) directs ubiquitination of ORC1, CDT1, RBL2, ELF4, CDKN1A, RAG2, FOXO1A, and probably MYC and TAL1. SCF(FBXW7) directs ubiquitination of cyclin E, NOTCH1 released notch intracellular domain (NICD), and probably PSEN1. SCF(FBXW2) directs ubiquitination of GCM1. SCF(FBXO32) directs ubiquitination of MYOD1. SCF(FBXO7) directs ubiquitination of BIRC2 and DLGAP5. SCF(FBXO33) directs ubiquitination of YBX1. SCF(FBXO1) directs ubiquitination of BCL6 and DTL but does not seem to direct ubiquitination of TP53. SCF(BTRC) mediates the ubiquitination of NFKBIA at 'Lys-21' and 'Lys-22'; the degradation frees the associated NFKB1-RELA dimer to translocate into the nucleus and to activate transcription. SCF(CCNF) directs ubiquitination of CCP110. SCF(FBXL3) and SCF(FBXL21) direct ubiquitination of CRY1 and CRY2. SCF(FBXO9) directs ubiquitination of TTI1 and TELO2. SCF(FBXO10) directs ubiquitination of BCL2. Neddylated CUL1-RBX1 ubiquitinates p53/TP53 recruited by Cul7-RING(FBXW8) complex. SCF(BTRC) directs 'Lys-48'-linked ubiquitination of UBR2 in the T-cell receptor signaling pathway. The SCF(FBXO31) protein ligase complex specifically mediates the ubiquitination of proteins amidated at their C-terminus in response to oxidative stress. In Mus musculus (Mouse), this protein is Cullin-1 (Cul1).